Consider the following 416-residue polypeptide: MSLVAIGINHKTATVDLREKVAFSPDKIHDAMKSLASRTRSGEAVIVSTCNRTELYCNNGDETDIIEWLEEYHGLEHQDVAPCLYNYHGQEAVRHLMRVASGLDSLILGEPQILGQVKQAFVKAKEAGTVALTIDRLFQNTFSVAKKVRTETEIGAAAVSVAFAAVSMAKHIFSSLSTTKVLLIGAGETIELVAKHLKDNGVASMVVANRTLERAQSMCEEFNATAITLAQIPDFLPKADIVISSTASPLPILGKGMVEKALKQRRHQPMLLVDIAVPRDIEPEVADLDDAFLYTVDDLHSIIEQNKASRKEAAEQAELITEEQSHLFMEWVRSLESVDSIREYRSQSMAIKDELVERALNKLAQGGDTEQVLVELANRLTNRLIHAPTQALTVASRQGDLNTLGQLRTALGLDKN.

Residues 49-52, S105, 110-112, and Q116 each bind substrate; these read TCNR and EPQ. The active-site Nucleophile is C50. 185–190 contacts NADP(+); it reads GAGETI.

Belongs to the glutamyl-tRNA reductase family. In terms of assembly, homodimer.

It carries out the reaction (S)-4-amino-5-oxopentanoate + tRNA(Glu) + NADP(+) = L-glutamyl-tRNA(Glu) + NADPH + H(+). It participates in porphyrin-containing compound metabolism; protoporphyrin-IX biosynthesis; 5-aminolevulinate from L-glutamyl-tRNA(Glu): step 1/2. Its function is as follows. Catalyzes the NADPH-dependent reduction of glutamyl-tRNA(Glu) to glutamate 1-semialdehyde (GSA). The protein is Glutamyl-tRNA reductase of Shewanella oneidensis (strain ATCC 700550 / JCM 31522 / CIP 106686 / LMG 19005 / NCIMB 14063 / MR-1).